A 657-amino-acid polypeptide reads, in one-letter code: UvrABC system protein B (657 aa).

In terms of domain architecture, Helicase ATP-binding spans 25–182 (KSIKKGNEFQ…KKLIEIQYER (158 aa)). 38-45 (GVTGSGKT) lines the ATP pocket. Positions 91–114 (YYDYYQPEAYVPQTDTFIEKDASI) match the Beta-hairpin motif. Residues 429 to 595 (QIDDLYTEIQ…TINKEVRDLI (167 aa)) form the Helicase C-terminal domain. In terms of domain architecture, UVR spans 621–656 (KKLIKEYTEEMMLAAKNLQFERAAQLRDEIEELKGK).

The protein belongs to the UvrB family. In terms of assembly, forms a heterotetramer with UvrA during the search for lesions. Interacts with UvrC in an incision complex.

The protein localises to the cytoplasm. In terms of biological role, the UvrABC repair system catalyzes the recognition and processing of DNA lesions. A damage recognition complex composed of 2 UvrA and 2 UvrB subunits scans DNA for abnormalities. Upon binding of the UvrA(2)B(2) complex to a putative damaged site, the DNA wraps around one UvrB monomer. DNA wrap is dependent on ATP binding by UvrB and probably causes local melting of the DNA helix, facilitating insertion of UvrB beta-hairpin between the DNA strands. Then UvrB probes one DNA strand for the presence of a lesion. If a lesion is found the UvrA subunits dissociate and the UvrB-DNA preincision complex is formed. This complex is subsequently bound by UvrC and the second UvrB is released. If no lesion is found, the DNA wraps around the other UvrB subunit that will check the other stand for damage. This is UvrABC system protein B from Clostridium botulinum (strain Alaska E43 / Type E3).